Here is a 177-residue protein sequence, read N- to C-terminus: Adenine phosphoribosyltransferase (177 aa).

It belongs to the purine/pyrimidine phosphoribosyltransferase family. Homodimer.

The protein resides in the cytoplasm. The enzyme catalyses AMP + diphosphate = 5-phospho-alpha-D-ribose 1-diphosphate + adenine. The protein operates within purine metabolism; AMP biosynthesis via salvage pathway; AMP from adenine: step 1/1. In terms of biological role, catalyzes a salvage reaction resulting in the formation of AMP, that is energically less costly than de novo synthesis. The sequence is that of Adenine phosphoribosyltransferase from Idiomarina loihiensis (strain ATCC BAA-735 / DSM 15497 / L2-TR).